Consider the following 398-residue polypeptide: 1-deoxy-D-xylulose 5-phosphate reductoisomerase (398 aa).

Positions 10, 11, 12, 13, 36, 37, 38, and 124 each coordinate NADPH. Residue K125 participates in 1-deoxy-D-xylulose 5-phosphate binding. Residue E126 coordinates NADPH. D150 lines the Mn(2+) pocket. 1-deoxy-D-xylulose 5-phosphate contacts are provided by S151, E152, S186, and H209. E152 serves as a coordination point for Mn(2+). G215 serves as a coordination point for NADPH. Positions 222, 227, 228, and 231 each coordinate 1-deoxy-D-xylulose 5-phosphate. E231 contacts Mn(2+).

It belongs to the DXR family. As to quaternary structure, homodimer. It depends on Mg(2+) as a cofactor. The cofactor is Mn(2+).

The catalysed reaction is 2-C-methyl-D-erythritol 4-phosphate + NADP(+) = 1-deoxy-D-xylulose 5-phosphate + NADPH + H(+). It participates in isoprenoid biosynthesis; isopentenyl diphosphate biosynthesis via DXP pathway; isopentenyl diphosphate from 1-deoxy-D-xylulose 5-phosphate: step 1/6. In terms of biological role, catalyzes the NADPH-dependent rearrangement and reduction of 1-deoxy-D-xylulose-5-phosphate (DXP) to 2-C-methyl-D-erythritol 4-phosphate (MEP). This chain is 1-deoxy-D-xylulose 5-phosphate reductoisomerase, found in Yersinia pseudotuberculosis serotype IB (strain PB1/+).